The sequence spans 473 residues: Gamma-aminobutyric acid receptor subunit beta-3 (473 aa).

The first 25 residues, 1 to 25, serve as a signal peptide directing secretion; sequence MWGFAGGRLFGIFSAPVLVAVVCCA. The Extracellular segment spans residues 26–246; it reads QSVNDPGNMS…FRLKRNIGYF (221 aa). Residues N33 and N105 are each glycosylated (N-linked (GlcNAc...) asparagine). Y122 contacts histamine. A disulfide bond links C161 and C175. N-linked (GlcNAc...) asparagine glycosylation is present at N174. E180, Y182, and T227 together coordinate 4-aminobutanoate. Residues 181–182 and T227 contribute to the histamine site; that span reads SY. A helical membrane pass occupies residues 247–267; the sequence is ILQTYMPSILITILSWVSFWI. The Cytoplasmic portion of the chain corresponds to 268 to 271; that stretch reads NYDA. A helical transmembrane segment spans residues 272-292; that stretch reads SAARVALGITTVLTMTTINTH. Topologically, residues 293–304 are extracellular; sequence LRETLPKIPYVK. Residues 305–328 form a helical membrane-spanning segment; it reads AIDMYLMGCFVFVFLALLEYAFVN. Over 329-447 the chain is Cytoplasmic; that stretch reads YIFFGRGPQR…KIPDLTDVNA (119 aa). The chain crosses the membrane as a helical span at residues 448-470; that stretch reads IDRWSRIVFPFTFSLFNLVYWLY. The Extracellular portion of the chain corresponds to 471–473; sequence YVN.

It belongs to the ligand-gated ion channel (TC 1.A.9) family. Gamma-aminobutyric acid receptor (TC 1.A.9.5) subfamily. GABRB3 sub-subfamily. In terms of assembly, heteropentamer, formed by a combination of alpha (GABRA1-6), beta (GABRB1-3), gamma (GABRG1-3), delta (GABRD), epsilon (GABRE), rho (GABRR1-3), pi (GABRP) and theta (GABRQ) chains, each subunit exhibiting distinct physiological and pharmacological properties. Can form functional homopentamers (in vitro). Interacts with UBQLN1. May interact with KIF21B. Identified in a complex of 720 kDa composed of LHFPL4, NLGN2, GABRA1, GABRB2, GABRG2 and GABRB3. Interacts with LHFPL4. Interacts with GIT1; this interaction is required for synaptic GABRB3 surface stability and inhibitory synapse strength.

It is found in the postsynaptic cell membrane. The protein localises to the cell membrane. The protein resides in the cytoplasmic vesicle membrane. The catalysed reaction is chloride(in) = chloride(out). Its activity is regulated as follows. Potentiated by histamine. Beta subunit of the heteropentameric ligand-gated chloride channel gated by gamma-aminobutyric acid (GABA), a major inhibitory neurotransmitter in the brain. GABA-gated chloride channels, also named GABA(A) receptors (GABAAR), consist of five subunits arranged around a central pore and contain GABA active binding site(s) located at the alpha and beta subunit interface(s). GABAARs containing beta-3/GABRB3 subunit are found at both synaptic and extrasynaptic sites. When activated by GABA, GABAARs selectively allow the flow of chloride anions across the cell membrane down their electrochemical gradient. Chloride influx into the postsynaptic neuron following GABAAR opening decreases the neuron ability to generate a new action potential, thereby reducing nerve transmission. GABAARs containing alpha-1 and beta-3 subunits exhibit synaptogenic activity; the gamma-2 subunit being necessary but not sufficient to induce rapid synaptic contacts formation. Extrasynaptic beta-3 receptors contribute to the tonic GABAergic inhibition. GABAARs containing alpha-1, beta-3 and epsilon subunits may permit spontaneous chloride channel activity while preserving the structural information required for GABA-gated openings. Beta-containing GABAARs can simultaneously bind GABA and histamine where histamine binds at the interface of two neighboring beta subunits, which may be involved in the regulation of sleep and wakefulness. Plays an important role in somatosensation and in the production of antinociception. The polypeptide is Gamma-aminobutyric acid receptor subunit beta-3 (Mus musculus (Mouse)).